The chain runs to 329 residues: Sulfate/thiosulfate import ATP-binding protein CysA (329 aa).

The 235-residue stretch at 3–237 (IEIRNVSKNF…PASDFVYHFL (235 aa)) folds into the ABC transporter domain. 35–42 (GPSGCGKT) is a binding site for ATP.

The protein belongs to the ABC transporter superfamily. Sulfate/tungstate importer (TC 3.A.1.6) family. The complex is composed of two ATP-binding proteins (CysA), two transmembrane proteins (CysT and CysW) and a solute-binding protein (CysP).

The protein localises to the cell inner membrane. The enzyme catalyses sulfate(out) + ATP + H2O = sulfate(in) + ADP + phosphate + H(+). It catalyses the reaction thiosulfate(out) + ATP + H2O = thiosulfate(in) + ADP + phosphate + H(+). Its function is as follows. Part of the ABC transporter complex CysAWTP involved in sulfate/thiosulfate import. Responsible for energy coupling to the transport system. The polypeptide is Sulfate/thiosulfate import ATP-binding protein CysA (Pseudomonas aeruginosa (strain ATCC 15692 / DSM 22644 / CIP 104116 / JCM 14847 / LMG 12228 / 1C / PRS 101 / PAO1)).